Here is a 974-residue protein sequence, read N- to C-terminus: Ovochymase-2 (974 aa).

Positions 1-21 are cleaved as a signal peptide; that stretch reads MAETSIFPIMMLTVMIGVGRG. Positions 22–49 are cleaved as a propeptide — activation peptide; that stretch reads VTDSPGRVSRCGERPAANTSVSYGLLSR. Asn-39 carries an N-linked (GlcNAc...) asparagine glycan. A Peptidase S1 1 domain is found at 50-299; the sequence is IVGGTSAVKG…LLNWLSENLN (250 aa). An intrachain disulfide couples Cys-75 to Cys-91. The active-site Charge relay system is His-90. Positions 112 and 117 each coordinate Ca(2+). Residue Asp-140 is the Charge relay system of the active site. 11 cysteine pairs are disulfide-bonded: Cys-174-Cys-244, Cys-205-Cys-223, Cys-234-Cys-263, Cys-312-Cys-342, Cys-369-Cys-388, Cys-435-Cys-462, Cys-489-Cys-510, Cys-615-Cys-631, Cys-713-Cys-776, Cys-741-Cys-754, and Cys-766-Cys-795. The active-site Charge relay system is the Ser-238. 2 CUB domains span residues 312 to 425 and 435 to 547; these read CSTN…YEAV and CGSV…ISFV. Positions 590-819 constitute a Peptidase S1 2 domain; that stretch reads LIKAEEAMPN…FIPWIMETIL (230 aa). The propeptide at 590–974 is activation peptide; sequence LIKAEEAMPN…WLSYSFHNQN (385 aa). An N-linked (GlcNAc...) asparagine glycan is attached at Asn-763. The interval 830–858 is disordered; that stretch reads EPHHPLFPPDKPSQQKALLPDSPPSSSSQ. Asn-926 is a glycosylation site (N-linked (GlcNAc...) asparagine).

The protein belongs to the peptidase S1 family. Post-translationally, the catalytically inactive 107 kDa form is processed both N- and C-terminally to give rise to the 66 kDa catalytically active form and inactive forms of 82 kDa and 59 kDa. In terms of tissue distribution, expressed specifically in the cells lining the bottom of epithelial folds in the oviductal pars recta.

Its subcellular location is the secreted. It catalyses the reaction Preferential cleavage at 371-Gly-Ser-Arg-|-Trp-374 of glycoprotein gp43 in Xenopus laevis coelemic egg envelope to yield gp41.. In terms of biological role, mediates gamete interaction by affecting the vitelline coat. This Bufo japonicus (Japanese common toad) protein is Ovochymase-2 (OVCH2).